Consider the following 292-residue polypeptide: Elongation factor Ts (292 aa).

The involved in Mg(2+) ion dislocation from EF-Tu stretch occupies residues 82-85 (TDFV).

This sequence belongs to the EF-Ts family.

The protein resides in the cytoplasm. Associates with the EF-Tu.GDP complex and induces the exchange of GDP to GTP. It remains bound to the aminoacyl-tRNA.EF-Tu.GTP complex up to the GTP hydrolysis stage on the ribosome. This chain is Elongation factor Ts, found in Bordetella avium (strain 197N).